We begin with the raw amino-acid sequence, 127 residues long: Translation initiation factor 5A (127 aa).

Position 35 is a hypusine (Lys35).

It belongs to the eIF-5A family.

The protein localises to the cytoplasm. Functionally, functions by promoting the formation of the first peptide bond. This chain is Translation initiation factor 5A, found in Methanospirillum hungatei JF-1 (strain ATCC 27890 / DSM 864 / NBRC 100397 / JF-1).